The chain runs to 599 residues: Proline--tRNA ligase (599 aa).

Belongs to the class-II aminoacyl-tRNA synthetase family. ProS type 1 subfamily. Homodimer.

It localises to the cytoplasm. It catalyses the reaction tRNA(Pro) + L-proline + ATP = L-prolyl-tRNA(Pro) + AMP + diphosphate. Catalyzes the attachment of proline to tRNA(Pro) in a two-step reaction: proline is first activated by ATP to form Pro-AMP and then transferred to the acceptor end of tRNA(Pro). As ProRS can inadvertently accommodate and process non-cognate amino acids such as alanine and cysteine, to avoid such errors it has two additional distinct editing activities against alanine. One activity is designated as 'pretransfer' editing and involves the tRNA(Pro)-independent hydrolysis of activated Ala-AMP. The other activity is designated 'posttransfer' editing and involves deacylation of mischarged Ala-tRNA(Pro). The misacylated Cys-tRNA(Pro) is not edited by ProRS. The sequence is that of Proline--tRNA ligase from Bifidobacterium animalis subsp. lactis (strain AD011).